The sequence spans 601 residues: Elongation factor 4 (601 aa).

One can recognise a tr-type G domain in the interval 8–189; it reads EQIRNFGIIA…LIVRKAPPPK (182 aa). Residue 20–25 coordinates GTP; it reads DHGKST.

This sequence belongs to the TRAFAC class translation factor GTPase superfamily. Classic translation factor GTPase family. LepA subfamily.

It is found in the cell membrane. The enzyme catalyses GTP + H2O = GDP + phosphate + H(+). Its function is as follows. Required for accurate and efficient protein synthesis under certain stress conditions. May act as a fidelity factor of the translation reaction, by catalyzing a one-codon backward translocation of tRNAs on improperly translocated ribosomes. Back-translocation proceeds from a post-translocation (POST) complex to a pre-translocation (PRE) complex, thus giving elongation factor G a second chance to translocate the tRNAs correctly. Binds to ribosomes in a GTP-dependent manner. This chain is Elongation factor 4, found in Tropheryma whipplei (strain TW08/27) (Whipple's bacillus).